A 286-amino-acid polypeptide reads, in one-letter code: Penicillin-insensitive murein endopeptidase (286 aa).

A signal peptide spans 1 to 22; it reads MNKILLKTTIIFTALFSLNVVA. Positions 117, 120, 127, 152, and 218 each coordinate Zn(2+).

This sequence belongs to the peptidase M74 family. Requires Zn(2+) as cofactor.

The protein localises to the periplasm. Functionally, murein endopeptidase that cleaves the D-alanyl-meso-2,6-diamino-pimelyl amide bond that connects peptidoglycan strands. Likely plays a role in the removal of murein from the sacculus. The protein is Penicillin-insensitive murein endopeptidase (mepA) of Haemophilus influenzae (strain ATCC 51907 / DSM 11121 / KW20 / Rd).